The chain runs to 915 residues: Isoleucine--tRNA ligase (915 aa).

The 'HIGH' region motif lies at 58 to 68 (PYANGHLHIGH). E568 provides a ligand contact to L-isoleucyl-5'-AMP. Positions 609–613 (KMSKS) match the 'KMSKS' region motif. K612 contacts ATP. C892, C895, C907, and C910 together coordinate Zn(2+).

It belongs to the class-I aminoacyl-tRNA synthetase family. IleS type 1 subfamily. Monomer. Zn(2+) is required as a cofactor.

Its subcellular location is the cytoplasm. The catalysed reaction is tRNA(Ile) + L-isoleucine + ATP = L-isoleucyl-tRNA(Ile) + AMP + diphosphate. Functionally, catalyzes the attachment of isoleucine to tRNA(Ile). As IleRS can inadvertently accommodate and process structurally similar amino acids such as valine, to avoid such errors it has two additional distinct tRNA(Ile)-dependent editing activities. One activity is designated as 'pretransfer' editing and involves the hydrolysis of activated Val-AMP. The other activity is designated 'posttransfer' editing and involves deacylation of mischarged Val-tRNA(Ile). This chain is Isoleucine--tRNA ligase, found in Wolinella succinogenes (strain ATCC 29543 / DSM 1740 / CCUG 13145 / JCM 31913 / LMG 7466 / NCTC 11488 / FDC 602W) (Vibrio succinogenes).